The chain runs to 94 residues: Co-chaperonin GroES (94 aa).

Belongs to the GroES chaperonin family. As to quaternary structure, heptamer of 7 subunits arranged in a ring. Interacts with the chaperonin GroEL.

The protein localises to the cytoplasm. In terms of biological role, together with the chaperonin GroEL, plays an essential role in assisting protein folding. The GroEL-GroES system forms a nano-cage that allows encapsulation of the non-native substrate proteins and provides a physical environment optimized to promote and accelerate protein folding. GroES binds to the apical surface of the GroEL ring, thereby capping the opening of the GroEL channel. The sequence is that of Co-chaperonin GroES from Streptococcus pneumoniae (strain Hungary19A-6).